A 310-amino-acid polypeptide reads, in one-letter code: ADP-L-glycero-D-manno-heptose-6-epimerase (310 aa).

NADP(+) contacts are provided by residues 10–11 (FI), 31–32 (DN), K38, K53, 75–79 (EGACS), and N92. The Proton acceptor role is filled by Y140. An NADP(+)-binding site is contributed by K144. N169 provides a ligand contact to substrate. NADP(+)-binding residues include V170 and K178. Residue K178 is the Proton acceptor of the active site. Residues S180, H187, 201 to 204 (FEGS), R209, and Y272 each bind substrate.

Belongs to the NAD(P)-dependent epimerase/dehydratase family. HldD subfamily. In terms of assembly, homopentamer. It depends on NADP(+) as a cofactor.

It carries out the reaction ADP-D-glycero-beta-D-manno-heptose = ADP-L-glycero-beta-D-manno-heptose. Its pathway is nucleotide-sugar biosynthesis; ADP-L-glycero-beta-D-manno-heptose biosynthesis; ADP-L-glycero-beta-D-manno-heptose from D-glycero-beta-D-manno-heptose 7-phosphate: step 4/4. Catalyzes the interconversion between ADP-D-glycero-beta-D-manno-heptose and ADP-L-glycero-beta-D-manno-heptose via an epimerization at carbon 6 of the heptose. The protein is ADP-L-glycero-D-manno-heptose-6-epimerase of Salmonella dublin (strain CT_02021853).